The sequence spans 116 residues: uncharacterized protein (116 aa).

The 72-residue stretch at 2–73 (DGSVGTGRQV…PKALICGHRD (72 aa)) folds into the N-acetylmuramoyl-L-alanine amidase domain.

It to phage T3 and T7 N-acetylmuramoyl-L-alanine amidases.

This is an uncharacterized protein from Haemophilus influenzae (strain ATCC 51907 / DSM 11121 / KW20 / Rd).